A 257-amino-acid chain; its full sequence is Nickel import system ATP-binding protein NikD (257 aa).

Residues 4-245 enclose the ABC transporter domain; sequence IDIQNLTIKN…HLHPYTEQLI (242 aa). 37–44 is a binding site for ATP; the sequence is GESGAGKS.

This sequence belongs to the ABC transporter superfamily. The complex is composed of two ATP-binding proteins (NikD and NikE), two transmembrane proteins (NikB and NikC) and a solute-binding protein (NikA).

It localises to the cell membrane. The catalysed reaction is Ni(2+)(out) + ATP + H2O = Ni(2+)(in) + ADP + phosphate + H(+). Functionally, part of the ABC transporter complex NikABCDE (Opp2) involved in nickel import. Probably responsible for energy coupling to the transport system. The polypeptide is Nickel import system ATP-binding protein NikD (Staphylococcus aureus (strain bovine RF122 / ET3-1)).